A 146-amino-acid chain; its full sequence is uncharacterized protein (146 aa).

Residues 7–27 (FVLSITIVLVILIIIAFIWYN) form a helical membrane-spanning segment.

The protein belongs to the asfivirus E146L family.

Its subcellular location is the host membrane. It localises to the virion. This is an uncharacterized protein from Ornithodoros (relapsing fever ticks).